Reading from the N-terminus, the 331-residue chain is Ketol-acid reductoisomerase (NADP(+)) (331 aa).

One can recognise a KARI N-terminal Rossmann domain in the interval 2 to 181 (IKKYYESDAD…GATRAVVFET (180 aa)). NADP(+)-binding positions include 25–28 (YGSQ), arginine 48, serine 52, and 82–85 (DESQ). Histidine 107 is an active-site residue. Glycine 133 lines the NADP(+) pocket. The region spanning 182–327 (TFREETETDL…AEIRGLMPQF (146 aa)) is the KARI C-terminal knotted domain. Mg(2+) contacts are provided by aspartate 190, glutamate 194, glutamate 226, and glutamate 230. A substrate-binding site is contributed by serine 251.

It belongs to the ketol-acid reductoisomerase family. Requires Mg(2+) as cofactor.

The catalysed reaction is (2R)-2,3-dihydroxy-3-methylbutanoate + NADP(+) = (2S)-2-acetolactate + NADPH + H(+). It catalyses the reaction (2R,3R)-2,3-dihydroxy-3-methylpentanoate + NADP(+) = (S)-2-ethyl-2-hydroxy-3-oxobutanoate + NADPH + H(+). The protein operates within amino-acid biosynthesis; L-isoleucine biosynthesis; L-isoleucine from 2-oxobutanoate: step 2/4. It participates in amino-acid biosynthesis; L-valine biosynthesis; L-valine from pyruvate: step 2/4. Involved in the biosynthesis of branched-chain amino acids (BCAA). Catalyzes an alkyl-migration followed by a ketol-acid reduction of (S)-2-acetolactate (S2AL) to yield (R)-2,3-dihydroxy-isovalerate. In the isomerase reaction, S2AL is rearranged via a Mg-dependent methyl migration to produce 3-hydroxy-3-methyl-2-ketobutyrate (HMKB). In the reductase reaction, this 2-ketoacid undergoes a metal-dependent reduction by NADPH to yield (R)-2,3-dihydroxy-isovalerate. The protein is Ketol-acid reductoisomerase (NADP(+)) of Methanosphaerula palustris (strain ATCC BAA-1556 / DSM 19958 / E1-9c).